Reading from the N-terminus, the 364-residue chain is Dual-specificity RNA methyltransferase RlmN (364 aa).

The active-site Proton acceptor is E91. The region spanning 102-337 is the Radical SAM core domain; that stretch reads GTLRITQCLS…AIIRKSKGQD (236 aa). A disulfide bond links C109 and C342. 3 residues coordinate [4Fe-4S] cluster: C116, C120, and C123. S-adenosyl-L-methionine contacts are provided by residues 169–170, S201, 223–225, and N299; these read GE and SLH. C342 (S-methylcysteine intermediate) is an active-site residue.

This sequence belongs to the radical SAM superfamily. RlmN family. [4Fe-4S] cluster serves as cofactor.

It localises to the cytoplasm. The catalysed reaction is adenosine(2503) in 23S rRNA + 2 reduced [2Fe-2S]-[ferredoxin] + 2 S-adenosyl-L-methionine = 2-methyladenosine(2503) in 23S rRNA + 5'-deoxyadenosine + L-methionine + 2 oxidized [2Fe-2S]-[ferredoxin] + S-adenosyl-L-homocysteine. The enzyme catalyses adenosine(37) in tRNA + 2 reduced [2Fe-2S]-[ferredoxin] + 2 S-adenosyl-L-methionine = 2-methyladenosine(37) in tRNA + 5'-deoxyadenosine + L-methionine + 2 oxidized [2Fe-2S]-[ferredoxin] + S-adenosyl-L-homocysteine. In terms of biological role, specifically methylates position 2 of adenine 2503 in 23S rRNA and position 2 of adenine 37 in tRNAs. m2A2503 modification seems to play a crucial role in the proofreading step occurring at the peptidyl transferase center and thus would serve to optimize ribosomal fidelity. The chain is Dual-specificity RNA methyltransferase RlmN from Nitratidesulfovibrio vulgaris (strain DP4) (Desulfovibrio vulgaris).